The chain runs to 337 residues: Methylthioribose-1-phosphate isomerase (337 aa).

Residues 51–53 (RGA), arginine 88, and glutamine 187 each bind substrate. The active-site Proton donor is aspartate 228. A substrate-binding site is contributed by 238 to 239 (NK).

This sequence belongs to the eIF-2B alpha/beta/delta subunits family. MtnA subfamily.

It carries out the reaction 5-(methylsulfanyl)-alpha-D-ribose 1-phosphate = 5-(methylsulfanyl)-D-ribulose 1-phosphate. Its pathway is amino-acid biosynthesis; L-methionine biosynthesis via salvage pathway; L-methionine from S-methyl-5-thio-alpha-D-ribose 1-phosphate: step 1/6. Functionally, catalyzes the interconversion of methylthioribose-1-phosphate (MTR-1-P) into methylthioribulose-1-phosphate (MTRu-1-P). The protein is Methylthioribose-1-phosphate isomerase of Anaeromyxobacter sp. (strain Fw109-5).